The primary structure comprises 495 residues: Chromosomal replication initiator protein DnaA (495 aa).

The segment at 1 to 83 (MSVALWQQCL…KVQLTVGSRR (83 aa)) is domain I, interacts with DnaA modulators. The segment at 83–158 (RNVAMSSPRD…QVEGSLKHQS (76 aa)) is domain II. A disordered region spans residues 86 to 127 (AMSSPRDLGAPVSATTMNASRPTEAPAVHAAPRAKGDYADEQ). The segment at 159-375 (GLNPNFTFET…GALKKVIADS (217 aa)) is domain III, AAA+ region. Residues G203, G205, K206, and T207 each contribute to the ATP site. A domain IV, binds dsDNA region spans residues 376 to 495 (HFMGKPITQD…YKNLLRLLTS (120 aa)).

This sequence belongs to the DnaA family. In terms of assembly, oligomerizes as a right-handed, spiral filament on DNA at oriC.

It is found in the cytoplasm. Its function is as follows. Plays an essential role in the initiation and regulation of chromosomal replication. ATP-DnaA binds to the origin of replication (oriC) to initiate formation of the DNA replication initiation complex once per cell cycle. Binds the DnaA box (a 9 base pair repeat at the origin) and separates the double-stranded (ds)DNA. Forms a right-handed helical filament on oriC DNA; dsDNA binds to the exterior of the filament while single-stranded (ss)DNA is stabiized in the filament's interior. The ATP-DnaA-oriC complex binds and stabilizes one strand of the AT-rich DNA unwinding element (DUE), permitting loading of DNA polymerase. After initiation quickly degrades to an ADP-DnaA complex that is not apt for DNA replication. Binds acidic phospholipids. This chain is Chromosomal replication initiator protein DnaA, found in Chromohalobacter salexigens (strain ATCC BAA-138 / DSM 3043 / CIP 106854 / NCIMB 13768 / 1H11).